The sequence spans 643 residues: Phosphomethylpyrimidine synthase (643 aa).

Substrate is bound by residues asparagine 221, methionine 250, tyrosine 279, histidine 315, 335-337 (SRG), 376-379 (DGLR), and glutamate 415. Residue histidine 419 participates in Zn(2+) binding. Tyrosine 442 contacts substrate. Residue histidine 483 coordinates Zn(2+). 3 residues coordinate [4Fe-4S] cluster: cysteine 563, cysteine 566, and cysteine 571.

Belongs to the ThiC family. As to quaternary structure, homodimer. The cofactor is [4Fe-4S] cluster.

It catalyses the reaction 5-amino-1-(5-phospho-beta-D-ribosyl)imidazole + S-adenosyl-L-methionine = 4-amino-2-methyl-5-(phosphooxymethyl)pyrimidine + CO + 5'-deoxyadenosine + formate + L-methionine + 3 H(+). It participates in cofactor biosynthesis; thiamine diphosphate biosynthesis. Functionally, catalyzes the synthesis of the hydroxymethylpyrimidine phosphate (HMP-P) moiety of thiamine from aminoimidazole ribotide (AIR) in a radical S-adenosyl-L-methionine (SAM)-dependent reaction. This Nitrobacter hamburgensis (strain DSM 10229 / NCIMB 13809 / X14) protein is Phosphomethylpyrimidine synthase.